The primary structure comprises 89 residues: Small ribosomal subunit protein uS15 (89 aa).

This sequence belongs to the universal ribosomal protein uS15 family. As to quaternary structure, part of the 30S ribosomal subunit. Forms a bridge to the 50S subunit in the 70S ribosome, contacting the 23S rRNA.

In terms of biological role, one of the primary rRNA binding proteins, it binds directly to 16S rRNA where it helps nucleate assembly of the platform of the 30S subunit by binding and bridging several RNA helices of the 16S rRNA. Functionally, forms an intersubunit bridge (bridge B4) with the 23S rRNA of the 50S subunit in the ribosome. The polypeptide is Small ribosomal subunit protein uS15 (Levilactobacillus brevis (strain ATCC 367 / BCRC 12310 / CIP 105137 / JCM 1170 / LMG 11437 / NCIMB 947 / NCTC 947) (Lactobacillus brevis)).